The sequence spans 400 residues: Forkhead box protein A4-B (400 aa).

Residues 119–213 (KPPYSYISLI…ENGCYLRRQK (95 aa)) constitute a DNA-binding region (fork-head). Over residues 218–234 (ERSKSGEGERKGNKPGD) the composition is skewed to basic and acidic residues. Residues 218 to 290 (ERSKSGEGER…VGFSPTSEQA (73 aa)) are disordered. 2 stretches are compositionally biased toward polar residues: residues 249 to 258 (DCSSSRSPQA) and 267 to 277 (STGSSIHQATG).

Primarily expressed in the dorsal blastopore lip (Spemann organizer) of early gastrulae. At later stages, expressed in the dorsal mesoderm and the neural floor plate. In the dorsal mesoderm, expressed in the notochord but not in the presomitic mesoderm. Also expressed in the mid-brain area.

The protein resides in the nucleus. In terms of biological role, transcriptional repressor involved in embryonic nervous system development. Plays a role in the induction and patterning of the anterior-posterior neural axis. Involved in the establishment of floor plate differentiation from neural plate cells during gastrulation. Binds the anf1 promoter sequence to restrict expression of anf1 to the anterior of the neural plate, thereby patterning the forebrain. Can bind to the HNF-3-alpha DNA target sequence. Cooperates with t/bra in a dose-dependent manner to specify dorsal mesoderm formation, including notochord. May be involved in the dorso-ventral patterning of the mesoderm. Binds to DNA via the target sequence 5'-[GA]TAAA[TC]A-3', with 5'-GTAAATA-3' being the preferred binding site. The protein is Forkhead box protein A4-B (foxa4-b) of Xenopus laevis (African clawed frog).